Consider the following 485-residue polypeptide: Glutamyl-tRNA(Gln) amidotransferase subunit A (485 aa).

Catalysis depends on charge relay system residues Lys80 and Ser155. The active-site Acyl-ester intermediate is Ser179.

This sequence belongs to the amidase family. GatA subfamily. Heterotrimer of A, B and C subunits.

The catalysed reaction is L-glutamyl-tRNA(Gln) + L-glutamine + ATP + H2O = L-glutaminyl-tRNA(Gln) + L-glutamate + ADP + phosphate + H(+). In terms of biological role, allows the formation of correctly charged Gln-tRNA(Gln) through the transamidation of misacylated Glu-tRNA(Gln) in organisms which lack glutaminyl-tRNA synthetase. The reaction takes place in the presence of glutamine and ATP through an activated gamma-phospho-Glu-tRNA(Gln). The protein is Glutamyl-tRNA(Gln) amidotransferase subunit A of Endomicrobium trichonymphae.